Reading from the N-terminus, the 554-residue chain is Dihydroxy-acid dehydratase (554 aa).

Asp-78 lines the Mg(2+) pocket. Cys-119 provides a ligand contact to [2Fe-2S] cluster. Mg(2+) is bound by residues Asp-120 and Lys-121. Lys-121 carries the post-translational modification N6-carboxylysine. Cys-191 contacts [2Fe-2S] cluster. Glu-444 serves as a coordination point for Mg(2+). The Proton acceptor role is filled by Ser-470.

It belongs to the IlvD/Edd family. Homodimer. The cofactor is [2Fe-2S] cluster. Mg(2+) is required as a cofactor.

The enzyme catalyses (2R)-2,3-dihydroxy-3-methylbutanoate = 3-methyl-2-oxobutanoate + H2O. It carries out the reaction (2R,3R)-2,3-dihydroxy-3-methylpentanoate = (S)-3-methyl-2-oxopentanoate + H2O. It functions in the pathway amino-acid biosynthesis; L-isoleucine biosynthesis; L-isoleucine from 2-oxobutanoate: step 3/4. The protein operates within amino-acid biosynthesis; L-valine biosynthesis; L-valine from pyruvate: step 3/4. Functionally, functions in the biosynthesis of branched-chain amino acids. Catalyzes the dehydration of (2R,3R)-2,3-dihydroxy-3-methylpentanoate (2,3-dihydroxy-3-methylvalerate) into 2-oxo-3-methylpentanoate (2-oxo-3-methylvalerate) and of (2R)-2,3-dihydroxy-3-methylbutanoate (2,3-dihydroxyisovalerate) into 2-oxo-3-methylbutanoate (2-oxoisovalerate), the penultimate precursor to L-isoleucine and L-valine, respectively. The chain is Dihydroxy-acid dehydratase from Nitratidesulfovibrio vulgaris (strain DP4) (Desulfovibrio vulgaris).